The primary structure comprises 292 residues: 33 kDa chaperonin (292 aa).

2 disulfide bridges follow: C230-C232 and C263-C266.

It belongs to the HSP33 family. In terms of processing, under oxidizing conditions two disulfide bonds are formed involving the reactive cysteines. Under reducing conditions zinc is bound to the reactive cysteines and the protein is inactive.

It localises to the cytoplasm. Its function is as follows. Redox regulated molecular chaperone. Protects both thermally unfolding and oxidatively damaged proteins from irreversible aggregation. Plays an important role in the bacterial defense system toward oxidative stress. This Salmonella typhimurium (strain LT2 / SGSC1412 / ATCC 700720) protein is 33 kDa chaperonin.